Reading from the N-terminus, the 544-residue chain is CTP synthase (544 aa).

The segment at 1 to 267 is amidoligase domain; it reads MTKFVFVTGG…AQRVLEILNL (267 aa). Ser13 lines the CTP pocket. Ser13 is a UTP binding site. 14–19 provides a ligand contact to ATP; that stretch reads SIGKGI. Residue Tyr54 participates in L-glutamine binding. Asp71 lines the ATP pocket. Positions 71 and 141 each coordinate Mg(2+). Residues 148-150, 188-193, and Lys224 each bind CTP; these read DIE and KTKPTQ. Residues 188-193 and Lys224 each bind UTP; that span reads KTKPTQ. The Glutamine amidotransferase type-1 domain occupies 292–534; that stretch reads EIAIVGKYVR…IEAALRSRPQ (243 aa). Gly354 lines the L-glutamine pocket. Residue Cys381 is the Nucleophile; for glutamine hydrolysis of the active site. Residues 382-385, Glu405, and Arg462 contribute to the L-glutamine site; that span reads LGMQ. Active-site residues include His507 and Glu509.

This sequence belongs to the CTP synthase family. As to quaternary structure, homotetramer.

The enzyme catalyses UTP + L-glutamine + ATP + H2O = CTP + L-glutamate + ADP + phosphate + 2 H(+). The catalysed reaction is L-glutamine + H2O = L-glutamate + NH4(+). It carries out the reaction UTP + NH4(+) + ATP = CTP + ADP + phosphate + 2 H(+). It functions in the pathway pyrimidine metabolism; CTP biosynthesis via de novo pathway; CTP from UDP: step 2/2. Allosterically activated by GTP, when glutamine is the substrate; GTP has no effect on the reaction when ammonia is the substrate. The allosteric effector GTP functions by stabilizing the protein conformation that binds the tetrahedral intermediate(s) formed during glutamine hydrolysis. Inhibited by the product CTP, via allosteric rather than competitive inhibition. Functionally, catalyzes the ATP-dependent amination of UTP to CTP with either L-glutamine or ammonia as the source of nitrogen. Regulates intracellular CTP levels through interactions with the four ribonucleotide triphosphates. The polypeptide is CTP synthase (Synechococcus sp. (strain JA-2-3B'a(2-13)) (Cyanobacteria bacterium Yellowstone B-Prime)).